Here is a 334-residue protein sequence, read N- to C-terminus: D-aspartate oxidase 2 (334 aa).

D38, K39, S46, G310, and T315 together coordinate FAD.

This sequence belongs to the DAMOX/DASOX family. FAD is required as a cofactor. In terms of tissue distribution, expressed in the intestinal cells, pharyngeal muscles, and body wall muscles in adult hermaphrodites.

It localises to the cytoplasm. The enzyme catalyses D-aspartate + O2 + H2O = oxaloacetate + H2O2 + NH4(+). The catalysed reaction is D-glutamate + O2 + H2O = H2O2 + 2-oxoglutarate + NH4(+). With respect to regulation, inhibited by thiolactomycin. Its function is as follows. Selectively catalyzes the oxidative deamination of acidic amino acids. May play a role in the egg-laying events and early development of the worm, in addition to quality control of the germ cells. The chain is D-aspartate oxidase 2 (ddo-2) from Caenorhabditis elegans.